The primary structure comprises 956 residues: uncharacterized protein (956 aa).

6 consecutive transmembrane segments (helical) span residues 40-60, 104-124, 137-157, 166-186, 264-284, and 301-321; these read SGIV…LPIV, FLLG…TTIL, AILA…AVLF, WYFL…YLVY, YVIG…SVLI, and FSLL…FDYL. The disordered stretch occupies residues 580–609; that stretch reads NHYGLPEALDSSLESEEENLDPEEDIDPEI. Residues 592 to 609 show a composition bias toward acidic residues; sequence LESEEENLDPEEDIDPEI. The stretch at 640–672 forms a coiled coil; it reads KSVIQKQAAEKAEEERKAEEEKLLAVRNAKKKG.

The protein belongs to the ycf78 family.

The protein resides in the plastid. It localises to the chloroplast membrane. This is an uncharacterized protein from Nephroselmis olivacea (Green alga).